Reading from the N-terminus, the 252-residue chain is Enolase-phosphatase E1 (252 aa).

Asp18 and Glu20 together coordinate Mg(2+). Residues 149–150 (SS) and Lys184 contribute to the substrate site. Asp209 serves as a coordination point for Mg(2+).

Belongs to the HAD-like hydrolase superfamily. MasA/MtnC family. Monomer. Mg(2+) serves as cofactor.

Its subcellular location is the cytoplasm. The protein resides in the nucleus. The enzyme catalyses 5-methylsulfanyl-2,3-dioxopentyl phosphate + H2O = 1,2-dihydroxy-5-(methylsulfanyl)pent-1-en-3-one + phosphate. It participates in amino-acid biosynthesis; L-methionine biosynthesis via salvage pathway; L-methionine from S-methyl-5-thio-alpha-D-ribose 1-phosphate: step 3/6. Its pathway is amino-acid biosynthesis; L-methionine biosynthesis via salvage pathway; L-methionine from S-methyl-5-thio-alpha-D-ribose 1-phosphate: step 4/6. Its function is as follows. Bifunctional enzyme that catalyzes the enolization of 2,3-diketo-5-methylthiopentyl-1-phosphate (DK-MTP-1-P) into the intermediate 2-hydroxy-3-keto-5-methylthiopentenyl-1-phosphate (HK-MTPenyl-1-P), which is then dephosphorylated to form the acireductone 1,2-dihydroxy-3-keto-5-methylthiopentene (DHK-MTPene). The protein is Enolase-phosphatase E1 of Naegleria gruberi (Amoeba).